The following is a 430-amino-acid chain: GTPase Obg (430 aa).

One can recognise an Obg domain in the interval 1–158 (MFVDQVKISL…LDVSLELKLL (158 aa)). Residues 118 to 145 (KGGRGGRGNSRFATPRNPAPDFSEKGEP) are disordered. Residues 159–329 (ADVGLVGFPS…LLYAIADKLE (171 aa)) enclose the OBG-type G domain. GTP-binding positions include 165-172 (GFPSVGKS), 190-194 (FTTIK), 212-215 (DLPG), 282-285 (NKMD), and 310-312 (STI). Residues Ser172 and Thr192 each contribute to the Mg(2+) site. Residues 352 to 430 (KHTPSQDKFT…ILGGEFEFVE (79 aa)) form the OCT domain.

This sequence belongs to the TRAFAC class OBG-HflX-like GTPase superfamily. OBG GTPase family. In terms of assembly, monomer. Mg(2+) is required as a cofactor.

Its subcellular location is the cytoplasm. Its function is as follows. An essential GTPase which binds GTP, GDP and possibly (p)ppGpp with moderate affinity, with high nucleotide exchange rates and a fairly low GTP hydrolysis rate. Plays a role in control of the cell cycle, stress response, ribosome biogenesis and in those bacteria that undergo differentiation, in morphogenesis control. The polypeptide is GTPase Obg (Staphylococcus aureus (strain MRSA252)).